A 613-amino-acid polypeptide reads, in one-letter code: Dihydroxy-acid dehydratase 3 (613 aa).

Residue Asp-81 coordinates Mg(2+). Cys-122 provides a ligand contact to [2Fe-2S] cluster. Positions 123 and 124 each coordinate Mg(2+). N6-carboxylysine is present on Lys-124. Residue Cys-197 coordinates [2Fe-2S] cluster. Glu-493 serves as a coordination point for Mg(2+). Catalysis depends on Ser-519, which acts as the Proton acceptor.

This sequence belongs to the IlvD/Edd family. As to quaternary structure, homodimer. Requires [2Fe-2S] cluster as cofactor. It depends on Mg(2+) as a cofactor.

The catalysed reaction is (2R)-2,3-dihydroxy-3-methylbutanoate = 3-methyl-2-oxobutanoate + H2O. The enzyme catalyses (2R,3R)-2,3-dihydroxy-3-methylpentanoate = (S)-3-methyl-2-oxopentanoate + H2O. Its pathway is amino-acid biosynthesis; L-isoleucine biosynthesis; L-isoleucine from 2-oxobutanoate: step 3/4. The protein operates within amino-acid biosynthesis; L-valine biosynthesis; L-valine from pyruvate: step 3/4. Its function is as follows. Functions in the biosynthesis of branched-chain amino acids. Catalyzes the dehydration of (2R,3R)-2,3-dihydroxy-3-methylpentanoate (2,3-dihydroxy-3-methylvalerate) into 2-oxo-3-methylpentanoate (2-oxo-3-methylvalerate) and of (2R)-2,3-dihydroxy-3-methylbutanoate (2,3-dihydroxyisovalerate) into 2-oxo-3-methylbutanoate (2-oxoisovalerate), the penultimate precursor to L-isoleucine and L-valine, respectively. The sequence is that of Dihydroxy-acid dehydratase 3 from Nocardia farcinica (strain IFM 10152).